A 314-amino-acid chain; its full sequence is Glutathione synthetase (314 aa).

Residues 125-311 (EKIAAQLFPQ…IAGQLFDAIE (187 aa)) form the ATP-grasp domain. Residue 151-208 (FVQKQEQAILKPLDGMGGHSIFRSSNGDPNLNVILETLTDGGRTLAIAQRYLQQIIEG) coordinates ATP. 2 residues coordinate Mg(2+): Glu282 and Asn284.

It belongs to the prokaryotic GSH synthase family. It depends on Mg(2+) as a cofactor. Mn(2+) serves as cofactor.

The catalysed reaction is gamma-L-glutamyl-L-cysteine + glycine + ATP = glutathione + ADP + phosphate + H(+). It functions in the pathway sulfur metabolism; glutathione biosynthesis; glutathione from L-cysteine and L-glutamate: step 2/2. The chain is Glutathione synthetase from Xylella fastidiosa (strain Temecula1 / ATCC 700964).